The primary structure comprises 241 residues: MSPASSWKRKRPSSSSAQASKKRRVYRPAVSRSLARREPLQVQDFVWDTDVAFNRGGGCYLLTSYARGSAENQRKTAETITYKVAVNLGCAISGTMQQYCISSRPVCWIVYDAAPTGSAVTPKDIFGYPEGLVNWPTTWKVARAVSHRFIVKRRWVFTMESNGSRFDRDYTNLPAAIPQSLPVLNKFAKQLGVRTEWKNAEGGDFGDIKSGALYLVMAPANGAVFVARGNVRVYFKSVGNQ.

The Bipartite nuclear localization signal motif lies at 1–26; that stretch reads MSPASSWKRKRPSSSSAQASKKRRVY. A disordered region spans residues 1–30; that stretch reads MSPASSWKRKRPSSSSAQASKKRRVYRPAV.

This sequence belongs to the geminiviridae capsid protein family. As to quaternary structure, homomultimer. Interacts with the movement protein. Binds to single-stranded and double-stranded viral DNA.

It is found in the virion. The protein localises to the host nucleus. Its function is as follows. Encapsidates the viral genome into characteristic twinned ('geminate') particles. Binds the genomic viral ssDNA and shuttles it into and out of the cell nucleus. Plays a role in protection of the genome from degradation, virus acquisition and transmission by insect vectors, infectivity, and systemic movement. The CP of monopartite geminiviruses is absolutely essential for virus movement. This Avena sativa (Oat) protein is Capsid protein.